Reading from the N-terminus, the 207-residue chain is Basic helix-loop-helix transcription factor scleraxis (207 aa).

Disordered stretches follow at residues 1–91 and 151–183; these read MSFA…RDRT and AFFH…QPKQ. A compositionally biased stretch (basic and acidic residues) spans 73–91; the sequence is PGREPRQRHTANARERDRT. Residues 78–130 enclose the bHLH domain; that stretch reads RQRHTANARERDRTNSVNTAFTALRTLIPTEPADRKLSKIETLRLASSYISHL. Over residues 161–171 the composition is skewed to pro residues; that stretch reads PLPPPPPPPPL.

As to quaternary structure, efficient DNA binding requires dimerization with another bHLH protein. Dimerizes and binds the E-box consensus sequence with E12. Expressed in mesenchymal precursors of cartilage and in connective tissue. Highly expressed in tendons in the limb, tongue and diaphragm and in cartilage of the bronchi.

It is found in the nucleus. Its function is as follows. Plays an early essential role in mesoderm formation, as well as a later role in formation of somite-derived chondrogenic lineages. The chain is Basic helix-loop-helix transcription factor scleraxis (Scx) from Mus musculus (Mouse).